Here is a 213-residue protein sequence, read N- to C-terminus: MPTSPWVTLAHIVRPQGRRGEVIAELLTDFPEKFAERRHVFLTRDAASDAAPREMELAGYRLAQNRVVLHFAGIDSIDAAEMLRGLDVVIPESERAPLDQDAAYISDLIGCDVWDEAAGQRVGIVQDVDRQASHVDLLVVDCENGQRAEIPFVKAFLVKLDTTGKRITMRLPEGLLEINASTATAREPRARRTRKRGLRKPITGADATPPDSQ.

The region spanning 99-175 (DQDAAYISDL…RITMRLPEGL (77 aa)) is the PRC barrel domain. The tract at residues 182 to 213 (TATAREPRARRTRKRGLRKPITGADATPPDSQ) is disordered. Residues 189–199 (RARRTRKRGLR) show a composition bias toward basic residues.

Belongs to the RimM family. As to quaternary structure, binds ribosomal protein uS19.

It localises to the cytoplasm. An accessory protein needed during the final step in the assembly of 30S ribosomal subunit, possibly for assembly of the head region. Essential for efficient processing of 16S rRNA. May be needed both before and after RbfA during the maturation of 16S rRNA. It has affinity for free ribosomal 30S subunits but not for 70S ribosomes. In Acidobacterium capsulatum (strain ATCC 51196 / DSM 11244 / BCRC 80197 / JCM 7670 / NBRC 15755 / NCIMB 13165 / 161), this protein is Ribosome maturation factor RimM.